Consider the following 1517-residue polypeptide: DNA-directed RNA polymerase subunit beta' (1517 aa).

Residues C71, C73, C86, and C89 each contribute to the Zn(2+) site. The Mg(2+) site is built by D482, D484, and D486. The Zn(2+) site is built by C812, C886, C893, and C896.

It belongs to the RNA polymerase beta' chain family. The RNAP catalytic core consists of 2 alpha, 1 beta, 1 beta' and 1 omega subunit. When a sigma factor is associated with the core the holoenzyme is formed, which can initiate transcription. Requires Mg(2+) as cofactor. Zn(2+) serves as cofactor.

It catalyses the reaction RNA(n) + a ribonucleoside 5'-triphosphate = RNA(n+1) + diphosphate. Its function is as follows. DNA-dependent RNA polymerase catalyzes the transcription of DNA into RNA using the four ribonucleoside triphosphates as substrates. This is DNA-directed RNA polymerase subunit beta' from Campylobacter jejuni subsp. jejuni serotype O:23/36 (strain 81-176).